The sequence spans 141 residues: Translation initiation factor IF-1, chloroplastic (141 aa).

The N-terminal 46 residues, 1–46 (MLQLCSTFRPQLLLPCQFRFTNGVLIPQINYVASNSVVNIRPMIRC), are a transit peptide targeting the chloroplast. Residues 49-69 (ASGGRGGANRSKPAKPQVKEG) form a disordered region. The S1-like domain maps to 63-138 (KPQVKEGSNK…TKGRIIFRMS (76 aa)).

It belongs to the IF-1 family. In terms of assembly, component of the 30S ribosomal translation pre-initiation complex which assembles on the 30S ribosome in the order IF-2 and IF-3, IF-1 and N-formylmethionyl-tRNA(fMet); mRNA recruitment can occur at any time during PIC assembly.

The protein localises to the plastid. It is found in the chloroplast. One of the essential components for the initiation of protein synthesis. Stabilizes the binding of IF-2 and IF-3 on the 30S subunit to which N-formylmethionyl-tRNA(fMet) subsequently binds. Helps modulate mRNA selection, yielding the 30S pre-initiation complex (PIC). Upon addition of the 50S ribosomal subunit IF-1, IF-2 and IF-3 are released leaving the mature 70S translation initiation complex. The sequence is that of Translation initiation factor IF-1, chloroplastic from Arabidopsis thaliana (Mouse-ear cress).